Reading from the N-terminus, the 575-residue chain is FAD-linked oxidoreductase asqF (575 aa).

The first 23 residues, 1–23 (MALFRLSAAIVVIFLYIWSPSQR), serve as a signal peptide directing secretion. N-linked (GlcNAc...) asparagine glycosylation is found at Asn-45 and Asn-80. The FAD-binding PCMH-type domain occupies 118-306 (NQGRIPLYAA…VRVTMRTYPD (189 aa)). His-156 carries the post-translational modification Pros-8alpha-FAD histidine. N-linked (GlcNAc...) asparagine glycosylation is present at Asn-370.

The protein belongs to the oxygen-dependent FAD-linked oxidoreductase family. FAD serves as cofactor.

It carries out the reaction peniprequinolone + A = yaequinolone E + AH2. It functions in the pathway secondary metabolite biosynthesis. The protein operates within alkaloid biosynthesis. It participates in mycotoxin biosynthesis. Functionally, FAD-linked oxidoreductase; part of the gene cluster that mediates the biosynthesis of the aspoquinolone mycotoxins. Within the pathway, asqF performs FAD-dependent dehydrogenation of the dimethylallyl quinolone peniprequinolone to yield the conjugated aryl diene yaequinolone E. The first step of the pathway is catalyzed by the nonribosomal peptide synthetase asqK that condenses anthranilic acid and O-methyl-L-tyrosine to produce 4'-methoxycyclopeptin. 4'-methoxycyclopeptin is then converted to 4'-methoxydehydrocyclopeptin by the ketoglutarate-dependent dioxygenase asqJ. AsqJ also converts its first product 4'-methoxydehydrocyclopeptin to 4'-methoxycyclopenin. The following conversion of 4'-methoxycyclopenin into 4'-methoxyviridicatin is catalyzed by the cyclopenase asqI. 4'-methoxyviridicatin is the precursor of quinolone natural products, and is further converted to quinolinone B. The prenyltransferase asqH1 then catalyzes the canonical Friedel-Crafts alkylation of quinolinone B with dimethylallyl cation to yield dimethylallyl quinolone, which is subjected to FAD-dependent dehydrogenation by the FAD-linked oxidoreductase asqF to yield conjugated aryl diene. The delta(3') double bond then serves as the site of the second alkylation with DMAPP catalyzed by the prenyltransferase asqH2 to yield a carbenium ion intermediate, which can be attacked by H(2)O to yield a styrenyl quinolone containing a C3'-hydroxyprenyl chain. The FAD-dependent monooxygenase asqG performs epoxidation of the terminal C7'-C8' olefin. Finally, after dehydratation of the epoxide at C3 by asqC, the quinolone epoxide rearrangement protein asqO catalyzes an enzymatic 3-exo-tet cyclization to yield the cyclopropyl-THF ring system in aspoquinolone. The protein is FAD-linked oxidoreductase asqF of Emericella nidulans (strain FGSC A4 / ATCC 38163 / CBS 112.46 / NRRL 194 / M139) (Aspergillus nidulans).